We begin with the raw amino-acid sequence, 380 residues long: Erythronate-4-phosphate dehydrogenase (380 aa).

Residues Ser-45 and Thr-66 each coordinate substrate. NAD(+) contacts are provided by residues Asp-146, Thr-174, 205–207, and Asp-231; that span reads ASR. Residue Arg-207 is part of the active site. The active site involves Glu-236. The active-site Proton donor is His-253. Gly-256 contributes to the NAD(+) binding site. Tyr-257 lines the substrate pocket.

Belongs to the D-isomer specific 2-hydroxyacid dehydrogenase family. PdxB subfamily. Homodimer.

It is found in the cytoplasm. It catalyses the reaction 4-phospho-D-erythronate + NAD(+) = (R)-3-hydroxy-2-oxo-4-phosphooxybutanoate + NADH + H(+). The protein operates within cofactor biosynthesis; pyridoxine 5'-phosphate biosynthesis; pyridoxine 5'-phosphate from D-erythrose 4-phosphate: step 2/5. Catalyzes the oxidation of erythronate-4-phosphate to 3-hydroxy-2-oxo-4-phosphonooxybutanoate. This Pseudomonas fluorescens (strain SBW25) protein is Erythronate-4-phosphate dehydrogenase.